We begin with the raw amino-acid sequence, 505 residues long: Katanin p60 ATPase-containing subunit A-like 2 (505 aa).

The LisH domain maps to 25–57; it reads RRKNLLILIMHYLLQEGYVDSANSLEQETKISS. Disordered stretches follow at residues 94 to 127 and 140 to 167; these read LDHD…IGQQ and RTNG…EASE. Composition is skewed to polar residues over residues 114-127 and 155-164; these read GSNS…IGQQ and QESGGNSPQE. 298-305 is an ATP binding site; sequence GPPGTGKT.

It belongs to the AAA ATPase family. Katanin p60 subunit A1 subfamily. A-like 2 sub-subfamily.

It localises to the cytoplasm. The protein localises to the cytoskeleton. Its subcellular location is the spindle. It is found in the spindle pole. It carries out the reaction n ATP + n H2O + a microtubule = n ADP + n phosphate + (n+1) alpha/beta tubulin heterodimers.. Severs microtubules in vitro in an ATP-dependent manner. This activity may promote rapid reorganization of cellular microtubule arrays. The protein is Katanin p60 ATPase-containing subunit A-like 2 (katnal2) of Xenopus laevis (African clawed frog).